We begin with the raw amino-acid sequence, 144 residues long: Large ribosomal subunit protein uL13 (144 aa).

It belongs to the universal ribosomal protein uL13 family. In terms of assembly, part of the 50S ribosomal subunit.

This protein is one of the early assembly proteins of the 50S ribosomal subunit, although it is not seen to bind rRNA by itself. It is important during the early stages of 50S assembly. This chain is Large ribosomal subunit protein uL13, found in Heliobacterium modesticaldum (strain ATCC 51547 / Ice1).